Here is a 157-residue protein sequence, read N- to C-terminus: Phosphopantetheine adenylyltransferase (157 aa).

Thr10 contacts substrate. ATP contacts are provided by residues 10–11 (TF) and His18. Substrate-binding residues include Lys42, Leu74, and Arg88. ATP contacts are provided by residues 89–91 (GLR), Glu99, and 124–130 (NAFISSS).

It belongs to the bacterial CoaD family. Homohexamer. Mg(2+) is required as a cofactor.

It is found in the cytoplasm. It carries out the reaction (R)-4'-phosphopantetheine + ATP + H(+) = 3'-dephospho-CoA + diphosphate. Its pathway is cofactor biosynthesis; coenzyme A biosynthesis; CoA from (R)-pantothenate: step 4/5. Its function is as follows. Reversibly transfers an adenylyl group from ATP to 4'-phosphopantetheine, yielding dephospho-CoA (dPCoA) and pyrophosphate. This is Phosphopantetheine adenylyltransferase from Helicobacter pylori (strain Shi470).